Here is a 292-residue protein sequence, read N- to C-terminus: Probable endonuclease LCL3 (292 aa).

Residues 41-58 (YFSVAAFAAGSLSLAASY) traverse the membrane as a helical segment. Residues 83–247 (RWIKGRVTSV…KDARRGIWAK (165 aa)) form the TNase-like domain. R132 is an active-site residue. D137 contacts Ca(2+). Active-site residues include E140 and R180. The tract at residues 256–282 (EYKRRYAQAADGGEPPSKARAEKEQKR) is disordered. The span at 272–282 (SKARAEKEQKR) shows a compositional bias: basic and acidic residues.

It belongs to the LCL3 family.

It localises to the mitochondrion. Its subcellular location is the membrane. The chain is Probable endonuclease LCL3 (LCL3) from Schizophyllum commune (strain H4-8 / FGSC 9210) (Split gill fungus).